The chain runs to 184 residues: MAKLFFRYAAMNSGKSTQLLQIANNYESMDKKVALYTSAIDDRYGVGMITSRLNIQRESNTFDAGFDFLAHDYGDTACVLVDEAQFMTPEQAQQLHRLAHKRNIPVICFGLRTDFQGHPFPGSAWLLSLADDVEEIKTICHCGRKATMHIRIDGDGRRVKEGPQVEIGGEARYRAVCGRCFHHD.

Residues 9 to 16 and 82 to 85 each bind ATP; these read AAMNSGKS and DEAQ. The Proton acceptor role is filled by Glu83. Residues Cys140, Cys142, Cys177, and Cys180 each contribute to the Zn(2+) site.

Belongs to the thymidine kinase family. Homotetramer.

The protein localises to the cytoplasm. The enzyme catalyses thymidine + ATP = dTMP + ADP + H(+). This is Thymidine kinase from Chromobacterium violaceum (strain ATCC 12472 / DSM 30191 / JCM 1249 / CCUG 213 / NBRC 12614 / NCIMB 9131 / NCTC 9757 / MK).